Consider the following 188-residue polypeptide: uncharacterized protein (188 aa).

The tract at residues 133-153 (PKGRPTMKLQYPKMPPKPKTR) is disordered.

The protein belongs to the IS150/IS1296 orfA family.

This is an uncharacterized protein from Haemophilus influenzae (strain ATCC 51907 / DSM 11121 / KW20 / Rd).